Reading from the N-terminus, the 309-residue chain is Enoyl-CoA hydratase 2, peroxisomal (309 aa).

Residues 95 to 96, Lys-124, 208 to 213, Gly-231, and Phe-261 contribute to the substrate site; these read HG and DYNPLH. A MaoC-like domain is found at 183–295; that stretch reads PQRQPLTVCE…TKVKERNKTV (113 aa). The Microbody targeting signal signature appears at 307–309; the sequence is SSL.

Ubiquitous.

Its subcellular location is the peroxisome. The catalysed reaction is a (3R)-3-hydroxyacyl-CoA = a (2E)-enoyl-CoA + H2O. The protein operates within lipid metabolism; fatty acid beta-oxidation. Bidirectional monofunctional enoyl-CoA hydratase 2 involved in the degradation of even cis-unsaturated fatty acids. Devoid of 3-hydroxyacyl-CoA dehydrogenase activity. This Arabidopsis thaliana (Mouse-ear cress) protein is Enoyl-CoA hydratase 2, peroxisomal (ECH2).